The sequence spans 496 residues: Probable ATP-dependent DNA helicase RecS (496 aa).

Residues 25–192 (IESILSGKDT…MNLLELQHAV (168 aa)) enclose the Helicase ATP-binding domain. ATP is bound at residue 38–45 (LPTGGGKS). The DEAH box signature appears at 136–139 (DEAH). Residues 219-363 (RVIQLVENLQ…EIADVIRVLE (145 aa)) enclose the Helicase C-terminal domain.

This sequence belongs to the helicase family. RecQ subfamily. As to quaternary structure, interacts with SSB (ssbA) and YpbB.

Its subcellular location is the cytoplasm. The protein localises to the nucleoid. The catalysed reaction is Couples ATP hydrolysis with the unwinding of duplex DNA by translocating in the 3'-5' direction.. It catalyses the reaction ATP + H2O = ADP + phosphate + H(+). Functionally, probable 3'-5' DNA helicase. Required in synaptic and/or post-synaptic stages of recombination. Probably has an overlapping function with RecQ. It probably acts to help generate ss-DNA from ds-DNA breaks. This chain is Probable ATP-dependent DNA helicase RecS, found in Bacillus subtilis (strain 168).